We begin with the raw amino-acid sequence, 302 residues long: Protoheme IX farnesyltransferase (302 aa).

Helical transmembrane passes span valine 26–valine 46, tryptophan 48–leucine 68, valine 98–asparagine 118, leucine 120–leucine 140, isoleucine 148–glycine 168, alanine 174–valine 194, isoleucine 221–glycine 241, leucine 244–leucine 264, and isoleucine 280–leucine 300.

Belongs to the UbiA prenyltransferase family. Protoheme IX farnesyltransferase subfamily.

Its subcellular location is the cell inner membrane. It carries out the reaction heme b + (2E,6E)-farnesyl diphosphate + H2O = Fe(II)-heme o + diphosphate. It participates in porphyrin-containing compound metabolism; heme O biosynthesis; heme O from protoheme: step 1/1. Its function is as follows. Converts heme B (protoheme IX) to heme O by substitution of the vinyl group on carbon 2 of heme B porphyrin ring with a hydroxyethyl farnesyl side group. The polypeptide is Protoheme IX farnesyltransferase (Alkalilimnicola ehrlichii (strain ATCC BAA-1101 / DSM 17681 / MLHE-1)).